The chain runs to 651 residues: Protein EXECUTER 2, chloroplastic (651 aa).

The N-terminal 69 residues, 1-69 (MATTQPCLIG…KAPSLSCLRN (69 aa)), are a transit peptide targeting the chloroplast. Positions 103–138 (ESVVSLLKSQLEDAVEKEDFEEAVKLKQAISEATVD) constitute a UVR domain. The interval 330-359 (DATEELVGEGTEETNSSDDEEEVEEEENDS) is disordered.

The protein resides in the plastid. The protein localises to the chloroplast. Together with EX1, enables higher plants to perceive singlet oxygen as a stress signal in plastid that activates a genetically determined nuclear stress response program which triggers a programmed cell death (PCD). This transfer of singlet oxygen-induced stress-related signals from the plastid to the nucleus that triggers genetically controlled PCD pathway is unique to photosynthetic eukaryotes and operates under mild stress conditions, impeding photosystem II (PSII) without causing photooxidative damage of the plant. This chain is Protein EXECUTER 2, chloroplastic, found in Arabidopsis thaliana (Mouse-ear cress).